Consider the following 82-residue polypeptide: Cytochrome b559 subunit alpha (82 aa).

The chain crosses the membrane as a helical span at residues 21 to 35 (VIHSVTIPSLFIAGW). Histidine 23 is a binding site for heme.

Belongs to the PsbE/PsbF family. As to quaternary structure, heterodimer of an alpha subunit and a beta subunit. PSII is composed of 1 copy each of membrane proteins PsbA, PsbB, PsbC, PsbD, PsbE, PsbF, PsbH, PsbI, PsbJ, PsbK, PsbL, PsbM, PsbT, PsbX, PsbY, PsbZ, Psb30/Ycf12, at least 3 peripheral proteins of the oxygen-evolving complex and a large number of cofactors. It forms dimeric complexes. Heme b is required as a cofactor.

The protein localises to the plastid. Its subcellular location is the chloroplast thylakoid membrane. In terms of biological role, this b-type cytochrome is tightly associated with the reaction center of photosystem II (PSII). PSII is a light-driven water:plastoquinone oxidoreductase that uses light energy to abstract electrons from H(2)O, generating O(2) and a proton gradient subsequently used for ATP formation. It consists of a core antenna complex that captures photons, and an electron transfer chain that converts photonic excitation into a charge separation. The protein is Cytochrome b559 subunit alpha of Ostreococcus tauri.